The following is a 342-amino-acid chain: 3-isopropylmalate dehydrogenase (342 aa).

The substrate site is built by R87, R97, R121, and D212. Mg(2+) is bound by residues D212, D236, and D240. Residue G272 to D284 coordinates NAD(+). The span at R319–S328 shows a compositional bias: low complexity. Residues R319–G342 form a disordered region. Positions T329 to G342 are enriched in basic and acidic residues.

The protein belongs to the isocitrate and isopropylmalate dehydrogenases family. LeuB type 2 subfamily. As to quaternary structure, homodimer. Mg(2+) serves as cofactor. Requires Mn(2+) as cofactor.

It localises to the cytoplasm. It catalyses the reaction (2R,3S)-3-isopropylmalate + NAD(+) = 4-methyl-2-oxopentanoate + CO2 + NADH. It participates in amino-acid biosynthesis; L-leucine biosynthesis; L-leucine from 3-methyl-2-oxobutanoate: step 3/4. Its function is as follows. Catalyzes the oxidation of 3-carboxy-2-hydroxy-4-methylpentanoate (3-isopropylmalate) to 3-carboxy-4-methyl-2-oxopentanoate. The product decarboxylates to 4-methyl-2 oxopentanoate. This chain is 3-isopropylmalate dehydrogenase, found in Frankia casuarinae (strain DSM 45818 / CECT 9043 / HFP020203 / CcI3).